A 256-amino-acid chain; its full sequence is Phosphoribosylaminoimidazole-succinocarboxamide synthase (256 aa).

This sequence belongs to the SAICAR synthetase family.

The catalysed reaction is 5-amino-1-(5-phospho-D-ribosyl)imidazole-4-carboxylate + L-aspartate + ATP = (2S)-2-[5-amino-1-(5-phospho-beta-D-ribosyl)imidazole-4-carboxamido]succinate + ADP + phosphate + 2 H(+). It participates in purine metabolism; IMP biosynthesis via de novo pathway; 5-amino-1-(5-phospho-D-ribosyl)imidazole-4-carboxamide from 5-amino-1-(5-phospho-D-ribosyl)imidazole-4-carboxylate: step 1/2. In Synechococcus sp. (strain JA-3-3Ab) (Cyanobacteria bacterium Yellowstone A-Prime), this protein is Phosphoribosylaminoimidazole-succinocarboxamide synthase.